The chain runs to 430 residues: Adenylosuccinate synthetase (430 aa).

GTP contacts are provided by residues 12–18 (GDEGKGK) and 40–42 (GHT). The active-site Proton acceptor is the D13. The Mg(2+) site is built by D13 and G40. Residues 13–16 (DEGK), 38–41 (NAGH), T130, R144, Q224, T239, and R303 contribute to the IMP site. Residue H41 is the Proton donor of the active site. 299-305 (ATTGRPR) contacts substrate. Residues R305, 331–333 (KLD), and 413–415 (SVG) each bind GTP.

Belongs to the adenylosuccinate synthetase family. As to quaternary structure, homodimer. Mg(2+) serves as cofactor.

Its subcellular location is the cytoplasm. It carries out the reaction IMP + L-aspartate + GTP = N(6)-(1,2-dicarboxyethyl)-AMP + GDP + phosphate + 2 H(+). It participates in purine metabolism; AMP biosynthesis via de novo pathway; AMP from IMP: step 1/2. Plays an important role in the de novo pathway of purine nucleotide biosynthesis. Catalyzes the first committed step in the biosynthesis of AMP from IMP. The sequence is that of Adenylosuccinate synthetase from Trichlorobacter lovleyi (strain ATCC BAA-1151 / DSM 17278 / SZ) (Geobacter lovleyi).